The sequence spans 310 residues: D-alanine--D-alanine ligase (310 aa).

One can recognise an ATP-grasp domain in the interval 104 to 305 (KRLFHSEGLP…MPQLAERILQ (202 aa)). 135 to 190 (LGDFHGAAFVKPLDSGSSVGISRAVGKDELIRGVAKALSVSHRCMVERAIEGRELT) is an ATP binding site. Mg(2+)-binding residues include aspartate 259, glutamate 272, and asparagine 274.

Belongs to the D-alanine--D-alanine ligase family. Mg(2+) serves as cofactor. Mn(2+) is required as a cofactor.

It localises to the cytoplasm. It carries out the reaction 2 D-alanine + ATP = D-alanyl-D-alanine + ADP + phosphate + H(+). The protein operates within cell wall biogenesis; peptidoglycan biosynthesis. Cell wall formation. This Magnetococcus marinus (strain ATCC BAA-1437 / JCM 17883 / MC-1) protein is D-alanine--D-alanine ligase.